The following is a 968-amino-acid chain: RNA polymerase-associated protein RapA (968 aa).

A Helicase ATP-binding domain is found at 164 to 334; that stretch reads DVGRRHAPRV…FARLRLLDPN (171 aa). An ATP-binding site is contributed by 177 to 184; it reads DEVGLGKT. The DEAH box motif lies at 280 to 283; it reads DEAH. Positions 490–685 constitute a Helicase C-terminal domain; sequence RVEWLMGYLT…ALKAQLEQGR (196 aa).

The protein belongs to the SNF2/RAD54 helicase family. RapA subfamily. Interacts with the RNAP. Has a higher affinity for the core RNAP than for the holoenzyme. Its ATPase activity is stimulated by binding to RNAP.

Functionally, transcription regulator that activates transcription by stimulating RNA polymerase (RNAP) recycling in case of stress conditions such as supercoiled DNA or high salt concentrations. Probably acts by releasing the RNAP, when it is trapped or immobilized on tightly supercoiled DNA. Does not activate transcription on linear DNA. Probably not involved in DNA repair. The protein is RNA polymerase-associated protein RapA of Salmonella typhi.